Consider the following 680-residue polypeptide: DNA ligase (680 aa).

NAD(+) contacts are provided by residues 38 to 42 (DAEYD), 87 to 88 (SL), and glutamate 119. Lysine 121 (N6-AMP-lysine intermediate) is an active-site residue. The NAD(+) site is built by arginine 142, glutamate 179, lysine 296, and lysine 320. Zn(2+)-binding residues include cysteine 414, cysteine 417, cysteine 432, and cysteine 438. The region spanning 597–680 (IEDLPLKGLT…DLLRKHGRLE (84 aa)) is the BRCT domain.

It belongs to the NAD-dependent DNA ligase family. LigA subfamily. Mg(2+) is required as a cofactor. It depends on Mn(2+) as a cofactor.

The enzyme catalyses NAD(+) + (deoxyribonucleotide)n-3'-hydroxyl + 5'-phospho-(deoxyribonucleotide)m = (deoxyribonucleotide)n+m + AMP + beta-nicotinamide D-nucleotide.. Functionally, DNA ligase that catalyzes the formation of phosphodiester linkages between 5'-phosphoryl and 3'-hydroxyl groups in double-stranded DNA using NAD as a coenzyme and as the energy source for the reaction. It is essential for DNA replication and repair of damaged DNA. This chain is DNA ligase, found in Cellvibrio japonicus (strain Ueda107) (Pseudomonas fluorescens subsp. cellulosa).